Reading from the N-terminus, the 140-residue chain is Acyl carrier protein 1, chloroplastic (140 aa).

A chloroplast-targeting transit peptide spans 1–56 (MASAAAGASICIKSASFSPLAPGRISSLRSVSLPVSRKSFPSLKSSKSSFALRVSC). The Carrier domain occupies 60 to 135 (PETVAKVCGI…DAADLIEKLM (76 aa)). S95 carries the O-(pantetheine 4'-phosphoryl)serine modification.

This sequence belongs to the acyl carrier protein (ACP) family. 4'-phosphopantetheine is transferred from CoA to a specific serine of apo-ACP by acpS. This modification is essential for activity because fatty acids are bound in thioester linkage to the sulfhydryl of the prosthetic group.

Its subcellular location is the plastid. It localises to the chloroplast. The protein operates within lipid metabolism; fatty acid biosynthesis. Its function is as follows. Carrier of the growing fatty acid chain in fatty acid biosynthesis. The protein is Acyl carrier protein 1, chloroplastic (ACL1.1) of Cuphea lanceolata (Cigar flower).